A 291-amino-acid chain; its full sequence is MFKGAIVAIVTPFKNGEIDEPALRDLIEFQIENGTDGIVPCGTTGESATLSHEEHDRVIEITIDAVRKRVPVIAGTGSNSTVEAMRLTKHAHEAGADGVLVVAPYYNRPTQEGLYQHYKALAESVPIPIIPYNIPSRTGVNILPETVARLAKISNIVGIKEASGSLKQMNDVIRLCDDGFSVLSGDDFFTLPLLTLGGKGVISVISNVAPADMACLVDAFEAGNMKKARAMHDKMVPLVDALFIETNPTPVKAALALMGKISEDVRLPLYRMTETSREKLKRVMQNYGLIG.

A pyruvate-binding site is contributed by threonine 44. Tyrosine 132 (proton donor/acceptor) is an active-site residue. The active-site Schiff-base intermediate with substrate is lysine 160. Isoleucine 202 contacts pyruvate.

The protein belongs to the DapA family. As to quaternary structure, homotetramer; dimer of dimers.

The protein resides in the cytoplasm. The enzyme catalyses L-aspartate 4-semialdehyde + pyruvate = (2S,4S)-4-hydroxy-2,3,4,5-tetrahydrodipicolinate + H2O + H(+). It participates in amino-acid biosynthesis; L-lysine biosynthesis via DAP pathway; (S)-tetrahydrodipicolinate from L-aspartate: step 3/4. Catalyzes the condensation of (S)-aspartate-beta-semialdehyde [(S)-ASA] and pyruvate to 4-hydroxy-tetrahydrodipicolinate (HTPA). This chain is 4-hydroxy-tetrahydrodipicolinate synthase, found in Syntrophus aciditrophicus (strain SB).